The primary structure comprises 581 residues: Proline--tRNA ligase (581 aa).

Belongs to the class-II aminoacyl-tRNA synthetase family. ProS type 1 subfamily. As to quaternary structure, homodimer.

The protein resides in the cytoplasm. It catalyses the reaction tRNA(Pro) + L-proline + ATP = L-prolyl-tRNA(Pro) + AMP + diphosphate. Functionally, catalyzes the attachment of proline to tRNA(Pro) in a two-step reaction: proline is first activated by ATP to form Pro-AMP and then transferred to the acceptor end of tRNA(Pro). As ProRS can inadvertently accommodate and process non-cognate amino acids such as alanine and cysteine, to avoid such errors it has two additional distinct editing activities against alanine. One activity is designated as 'pretransfer' editing and involves the tRNA(Pro)-independent hydrolysis of activated Ala-AMP. The other activity is designated 'posttransfer' editing and involves deacylation of mischarged Ala-tRNA(Pro). The misacylated Cys-tRNA(Pro) is not edited by ProRS. The protein is Proline--tRNA ligase of Chlamydia trachomatis serovar D (strain ATCC VR-885 / DSM 19411 / UW-3/Cx).